Reading from the N-terminus, the 222-residue chain is CEACAM1-like protein UL7 (222 aa).

N-linked (GlcNAc...) asparagine; by host glycans are attached at residues Asn-50, Asn-56, Asn-60, Asn-71, Asn-105, Asn-109, Asn-125, Asn-132, Asn-147, Asn-164, Asn-168, and Asn-189. A helical transmembrane segment spans residues 193 to 213 (LALVGVVVFLVLIVVCIMGWW).

The protein belongs to the RL11 family. In terms of processing, highly glycosylated.

It localises to the secreted. It is found in the host cell membrane. Its function is as follows. Plays a role in modulating the host immune response and affecting host cytokine production. Structurally and functionally homolog of host CEACAM1, induces endothelial cell angiogenesis. This is CEACAM1-like protein UL7 (UL7) from Homo sapiens (Human).